We begin with the raw amino-acid sequence, 260 residues long: Cytochrome c oxidase subunit 2 (260 aa).

Topologically, residues 1–39 are mitochondrial intermembrane; it reads MKFEWLFLTIAPCDAAEPWQLGFQDAATPMMQGIIDLHH. The helical transmembrane segment at 40-61 threads the bilayer; the sequence is DIFFFLILILVFVSRILVRALW. Topologically, residues 62 to 76 are mitochondrial matrix; it reads HFHYKKNPIPQRIVH. The chain crosses the membrane as a helical span at residues 77–104; that stretch reads GTTIEILRTIFPSIIPMFIAIPSFALLY. The Mitochondrial intermembrane portion of the chain corresponds to 105-260; the sequence is SMDEVVVDPA…QLIPQTTGEA (156 aa). Cu cation-binding residues include His-186, Cys-221, Glu-223, Cys-225, and His-229. Glu-223 contacts Mg(2+).

Belongs to the cytochrome c oxidase subunit 2 family. In terms of assembly, component of the cytochrome c oxidase (complex IV, CIV), a multisubunit enzyme composed of a catalytic core of 3 subunits and several supernumerary subunits. The complex exists as a monomer or a dimer and forms supercomplexes (SCs) in the inner mitochondrial membrane with ubiquinol-cytochrome c oxidoreductase (cytochrome b-c1 complex, complex III, CIII). Cu cation serves as cofactor.

The protein localises to the mitochondrion inner membrane. It catalyses the reaction 4 Fe(II)-[cytochrome c] + O2 + 8 H(+)(in) = 4 Fe(III)-[cytochrome c] + 2 H2O + 4 H(+)(out). Functionally, component of the cytochrome c oxidase, the last enzyme in the mitochondrial electron transport chain which drives oxidative phosphorylation. The respiratory chain contains 3 multisubunit complexes succinate dehydrogenase (complex II, CII), ubiquinol-cytochrome c oxidoreductase (cytochrome b-c1 complex, complex III, CIII) and cytochrome c oxidase (complex IV, CIV), that cooperate to transfer electrons derived from NADH and succinate to molecular oxygen, creating an electrochemical gradient over the inner membrane that drives transmembrane transport and the ATP synthase. Cytochrome c oxidase is the component of the respiratory chain that catalyzes the reduction of oxygen to water. Electrons originating from reduced cytochrome c in the intermembrane space (IMS) are transferred via the dinuclear copper A center (CU(A)) of subunit 2 and heme A of subunit 1 to the active site in subunit 1, a binuclear center (BNC) formed by heme A3 and copper B (CU(B)). The BNC reduces molecular oxygen to 2 water molecules using 4 electrons from cytochrome c in the IMS and 4 protons from the mitochondrial matrix. In Glycine max (Soybean), this protein is Cytochrome c oxidase subunit 2 (COX2).